The sequence spans 506 residues: 2-isopropylmalate synthase (506 aa).

Residues 6–267 (IIVFDTTLRD…YTDIVTKEIY (262 aa)) enclose the Pyruvate carboxyltransferase domain. Aspartate 15, histidine 201, histidine 203, and asparagine 237 together coordinate Mn(2+). The interval 391–506 (SIQTLSTSSC…LNSYLSMKNR (116 aa)) is regulatory domain.

This sequence belongs to the alpha-IPM synthase/homocitrate synthase family. LeuA type 1 subfamily. Homodimer. Mn(2+) is required as a cofactor.

Its subcellular location is the cytoplasm. It catalyses the reaction 3-methyl-2-oxobutanoate + acetyl-CoA + H2O = (2S)-2-isopropylmalate + CoA + H(+). Its pathway is amino-acid biosynthesis; L-leucine biosynthesis; L-leucine from 3-methyl-2-oxobutanoate: step 1/4. Its function is as follows. Catalyzes the condensation of the acetyl group of acetyl-CoA with 3-methyl-2-oxobutanoate (2-ketoisovalerate) to form 3-carboxy-3-hydroxy-4-methylpentanoate (2-isopropylmalate). The protein is 2-isopropylmalate synthase of Campylobacter fetus subsp. fetus (strain 82-40).